A 693-amino-acid polypeptide reads, in one-letter code: Translation initiation factor IF-2 (693 aa).

In terms of domain architecture, tr-type G spans 181-349 (PRPPVVTVMG…MILLVAEMNE (169 aa)). Positions 190 to 197 (GHVDHGKT) are G1. 190-197 (GHVDHGKT) lines the GTP pocket. The G2 stretch occupies residues 215–219 (GITQS). A G3 region spans residues 236–239 (DTPG). GTP is bound by residues 236 to 240 (DTPGH) and 290 to 293 (NKID). Residues 290 to 293 (NKID) form a G4 region. A G5 region spans residues 327–329 (SAR).

It belongs to the TRAFAC class translation factor GTPase superfamily. Classic translation factor GTPase family. IF-2 subfamily.

It is found in the cytoplasm. In terms of biological role, one of the essential components for the initiation of protein synthesis. Protects formylmethionyl-tRNA from spontaneous hydrolysis and promotes its binding to the 30S ribosomal subunits. Also involved in the hydrolysis of GTP during the formation of the 70S ribosomal complex. The sequence is that of Translation initiation factor IF-2 from Thermotoga petrophila (strain ATCC BAA-488 / DSM 13995 / JCM 10881 / RKU-1).